The primary structure comprises 244 residues: Gas vesicle protein F (244 aa).

Residues 1 to 109 (MTVGLYLYGI…QLKELFAKLS (109 aa)) form an N-terminus region. Residues 110 to 233 (GQREVSIKIF…GDRLRIRYNN (124 aa)) form a C-terminus, modifed ferredoxin fold region. Residues 234-244 (LTAPYTFAQLI) are C-tail.

It belongs to the gas vesicle GvpF/GvpL family. As to quaternary structure, binds GvpA.

It is found in the gas vesicle. Its function is as follows. A minor component of the gas vesicle, may be involved in preventing GvpA aggregation during gas vesicle nucleation. Gas vesicles (GV) are hollow, gas filled proteinaceous nanostructures. During planktonic growth they allow positioning of the organism at a favorable depth for light or nutrient acquisition. In Microcystis aeruginosa (strain PCC 7806), this protein is Gas vesicle protein F.